The primary structure comprises 540 residues: T-complex protein 1 subunit alpha (540 aa).

The protein belongs to the TCP-1 chaperonin family. Component of the T-complex protein 1 (TCP1) complex.

Its subcellular location is the cytoplasm. Molecular chaperone; assists the folding of proteins upon ATP hydrolysis. This is T-complex protein 1 subunit alpha (TCP1) from Encephalitozoon cuniculi (strain GB-M1) (Microsporidian parasite).